Reading from the N-terminus, the 91-residue chain is UPF0512 protein M (91 aa).

It belongs to the UPF0512 family.

The polypeptide is UPF0512 protein M (Dictyostelium discoideum (Social amoeba)).